Reading from the N-terminus, the 470-residue chain is Cytochrome P450 monooxygenase sirC (470 aa).

Residues 12 to 34 form a helical membrane-spanning segment; sequence LRGMVVGTIMLLCYRYGLALSIL. The N-linked (GlcNAc...) asparagine glycan is linked to N399. C410 contributes to the heme binding site.

This sequence belongs to the cytochrome P450 family. The cofactor is heme.

The protein localises to the membrane. Its pathway is mycotoxin biosynthesis. In terms of biological role, cytochrome P450 monooxygenase; part of the gene cluster that mediates the biosynthesis of sirodesmin PL, an epipolythiodioxopiperazine (ETP) characterized by a disulfide bridged cyclic dipeptide and that acts as a phytotoxin which is involved in the blackleg didease of canola. SirD catalyzes the O-prenylation of L-tyrosine (L-Tyr) in the presence of dimethylallyl diphosphate (DMAPP) to yield 4-O-dimethylallyl-L-Tyr, and therefore represents probably the first pathway-specific enzyme in the biosynthesis of sirodesmin PL. 4-O-dimethylallyl-L-Tyr, then undergoes condensation with L-Ser in a reaction catalyzed by the non-ribosomal peptide synthase sirP to form the diketopiperazine (DKP) backbone. Further bishydroxylation of the DKP performed by the cytochrome P450 monooxygenase sirC leads to the production of the intermediate phomamide. This step is essential to form the reactive thiol group required for toxicity of sirodesmin PL. The next steps of sirodesmin biosynthesis are not well understood yet, but some predictions could be made from intermediate compounds identification. Phomamide is converted into phomalizarine via oxidation, probably by sirT. Further oxidation, methylation (by sirM or sirN) and reduction steps convert phomalizarine to deacetyl sirodesmin. Finally, acetyltransferase sirH probably acetylates deacetyl sirodesmin to produce sirodesmin PL. This chain is Cytochrome P450 monooxygenase sirC, found in Leptosphaeria maculans (Blackleg fungus).